The sequence spans 447 residues: Argininosuccinate synthase (447 aa).

ATP contacts are provided by residues 20 to 28 (AFSGGLDTS) and Ala-46. Residue Tyr-102 participates in L-citrulline binding. 2 residues coordinate ATP: Gly-132 and Thr-134. 3 residues coordinate L-aspartate: Thr-134, Asn-138, and Asp-139. Asn-138 lines the L-citrulline pocket. Asp-139 provides a ligand contact to ATP. Arg-142 and Ser-195 together coordinate L-citrulline. Asp-197 contributes to the ATP binding site. 3 residues coordinate L-citrulline: Thr-204, Glu-206, and Glu-283.

Belongs to the argininosuccinate synthase family. Type 2 subfamily. In terms of assembly, homotetramer.

The protein localises to the cytoplasm. It carries out the reaction L-citrulline + L-aspartate + ATP = 2-(N(omega)-L-arginino)succinate + AMP + diphosphate + H(+). It functions in the pathway amino-acid biosynthesis; L-arginine biosynthesis; L-arginine from L-ornithine and carbamoyl phosphate: step 2/3. This chain is Argininosuccinate synthase, found in Neisseria meningitidis serogroup C / serotype 2a (strain ATCC 700532 / DSM 15464 / FAM18).